The chain runs to 293 residues: tRNA pseudouridine synthase B (293 aa).

Asp39 functions as the Nucleophile in the catalytic mechanism.

It belongs to the pseudouridine synthase TruB family. Type 1 subfamily.

It carries out the reaction uridine(55) in tRNA = pseudouridine(55) in tRNA. In terms of biological role, responsible for synthesis of pseudouridine from uracil-55 in the psi GC loop of transfer RNAs. The protein is tRNA pseudouridine synthase B of Streptococcus thermophilus (strain ATCC BAA-250 / LMG 18311).